The sequence spans 216 residues: Uracil phosphoribosyltransferase (216 aa).

5-phospho-alpha-D-ribose 1-diphosphate is bound by residues Arg-85, Arg-110, and 135-143; that span reads DPMVATGYS. Residues Ile-200 and 205–207 contribute to the uracil site; that span reads GDA. Residue Asp-206 participates in 5-phospho-alpha-D-ribose 1-diphosphate binding.

This sequence belongs to the UPRTase family. The cofactor is Mg(2+).

The catalysed reaction is UMP + diphosphate = 5-phospho-alpha-D-ribose 1-diphosphate + uracil. The protein operates within pyrimidine metabolism; UMP biosynthesis via salvage pathway; UMP from uracil: step 1/1. Its activity is regulated as follows. Allosterically activated by GTP. Functionally, catalyzes the conversion of uracil and 5-phospho-alpha-D-ribose 1-diphosphate (PRPP) to UMP and diphosphate. The sequence is that of Uracil phosphoribosyltransferase from Paraburkholderia phytofirmans (strain DSM 17436 / LMG 22146 / PsJN) (Burkholderia phytofirmans).